The primary structure comprises 67 residues: Large ribosomal subunit protein uL29 (67 aa).

The protein belongs to the universal ribosomal protein uL29 family.

This Rubrobacter xylanophilus (strain DSM 9941 / JCM 11954 / NBRC 16129 / PRD-1) protein is Large ribosomal subunit protein uL29.